Reading from the N-terminus, the 442-residue chain is Serine--tRNA ligase (442 aa).

Position 244–246 (244–246) interacts with L-serine; the sequence is TAE. 275–277 contacts ATP; it reads RAE. Glutamate 298 contacts L-serine. 365–368 serves as a coordination point for ATP; the sequence is EISS. Serine 400 contacts L-serine.

Belongs to the class-II aminoacyl-tRNA synthetase family. Type-1 seryl-tRNA synthetase subfamily. In terms of assembly, homodimer. The tRNA molecule binds across the dimer.

It localises to the cytoplasm. The enzyme catalyses tRNA(Ser) + L-serine + ATP = L-seryl-tRNA(Ser) + AMP + diphosphate + H(+). It catalyses the reaction tRNA(Sec) + L-serine + ATP = L-seryl-tRNA(Sec) + AMP + diphosphate + H(+). Its pathway is aminoacyl-tRNA biosynthesis; selenocysteinyl-tRNA(Sec) biosynthesis; L-seryl-tRNA(Sec) from L-serine and tRNA(Sec): step 1/1. Catalyzes the attachment of serine to tRNA(Ser). Is also able to aminoacylate tRNA(Sec) with serine, to form the misacylated tRNA L-seryl-tRNA(Sec), which will be further converted into selenocysteinyl-tRNA(Sec). The protein is Serine--tRNA ligase of Bradyrhizobium sp. (strain ORS 278).